The following is a 3462-amino-acid chain: Extracellular matrix-binding protein EbhA (3462 aa).

Residues methionine 1–asparagine 19 show a composition bias toward polar residues. A disordered region spans residues methionine 1–valine 21. 19 FIVAR domains span residues alanine 24–alanine 82, alanine 150–alanine 208, alanine 276–alanine 334, alanine 402–alanine 460, alanine 528–alanine 586, alanine 654–alanine 712, alanine 780–alanine 838, alanine 906–alanine 964, alanine 1032–glutamate 1093, alanine 1158–alanine 1216, alanine 1284–alanine 1342, alanine 1410–alanine 1467, leucine 1535–alanine 1593, alanine 1661–leucine 1719, alanine 1787–leucine 1845, alanine 1913–valine 1971, serine 2039–alanine 2093, alanine 2161–leucine 2220, and alanine 2415–alanine 2471. The helical transmembrane segment at valine 3267–alanine 3289 threads the bilayer. Residues arginine 3365–lysine 3462 form a disordered region. Composition is skewed to basic and acidic residues over residues threonine 3380–histidine 3390 and glutamine 3429–serine 3439. Residues threonine 3444–lysine 3462 are compositionally biased toward basic residues.

The protein localises to the cell membrane. The polypeptide is Extracellular matrix-binding protein EbhA (ebhA) (Staphylococcus aureus (strain Newman)).